We begin with the raw amino-acid sequence, 92 residues long: Beta-2-microglobulin (92 aa).

Residues 2-91 form the Ig-like C1-type domain; the sequence is PQIQVYTRHP…VSLNEPKTVI (90 aa). The cysteines at positions 22 and 77 are disulfide-linked.

Belongs to the beta-2-microglobulin family. As to quaternary structure, heterodimer of an alpha chain and a beta chain. Beta-2-microglobulin is the beta-chain of major histocompatibility complex class I molecules.

The protein localises to the secreted. Functionally, component of the class I major histocompatibility complex (MHC). Involved in the presentation of peptide antigens to the immune system. In Mus cervicolor (Fawn-colored mouse), this protein is Beta-2-microglobulin (B2m).